A 1126-amino-acid chain; its full sequence is Replication protein 1a (1126 aa).

The methyltransferase stretch occupies residues 69–406 (SFSLDATQQN…HTIIGGVTLI (338 aa)). An Alphavirus-like MT domain is found at 90–278 (VFSNSSSSSH…HRFSLLKHYL (189 aa)). In terms of domain architecture, (+)RNA virus helicase ATP-binding spans 806-963 (DQSCVFASAE…HKLTGKVERK (158 aa)). The interval 834 to 1094 (TIVDGVAGCG…RHKKTFKYFT (261 aa)) is ATP-dependent helicase. Position 838–845 (838–845 (GVAGCGKT)) interacts with ATP. The (+)RNA virus helicase C-terminal domain maps to 964–1125 (LITWRSPADA…SILARSYNHN (162 aa)).

The protein belongs to the bromoviridae replication protein 1a family. As to quaternary structure, interacts with RNA-directed RNA polymerase 2a.

The protein localises to the host endoplasmic reticulum membrane. Its function is as follows. Involved in the virus replication. Contains a helicase domain and a methyltransferase domain. The methyltransferase domain is probably involved in viral RNA capping. Involved in the formation of ER membrane spherular invaginations in which RNA replication complexes form. In Alfalfa mosaic virus (AMV), this protein is Replication protein 1a.